A 115-amino-acid chain; its full sequence is uncharacterized protein (115 aa).

3 helical membrane-spanning segments follow: residues 6 to 26 (ILII…PFMV), 43 to 63 (ALSC…IHIL), and 84 to 104 (IFKV…VLVQ).

The protein belongs to the AzlD/HI_1737/HP1330 family.

It is found in the cell membrane. This is an uncharacterized protein from Helicobacter pylori (strain ATCC 700392 / 26695) (Campylobacter pylori).